The following is a 408-amino-acid chain: Putative F-box protein At1g53550 (408 aa).

Residues 29-74 (TCYFDPIPVDLVINILSRLSLECIARCRCVSKLWSSIIRRPNYNQL) enclose the F-box domain.

The chain is Putative F-box protein At1g53550 from Arabidopsis thaliana (Mouse-ear cress).